Reading from the N-terminus, the 167-residue chain is Ubiquitin-like-conjugating enzyme ATG10 (167 aa).

Catalysis depends on Cys-133, which acts as the Glycyl thioester intermediate.

Belongs to the ATG10 family. Forms homooligomers. Interacts with ATG7 and ATG12.

The protein resides in the preautophagosomal structure membrane. Functionally, E2-like enzyme required for the cytoplasm to vacuole transport (Cvt), autophagy and nucleophagy. Acts as an E2-like enzyme that catalyzes the conjugation of ATG12 to ATG5. ATG12 conjugation to ATG5 is required for proper localization of ATG8 to the preautophagosomal structure (PAS). Likely serves as an ATG5-recognition molecule. In Saccharomyces cerevisiae (strain ATCC 204508 / S288c) (Baker's yeast), this protein is Ubiquitin-like-conjugating enzyme ATG10 (ATG10).